Here is a 548-residue protein sequence, read N- to C-terminus: Sesquiterpene synthase 9 (548 aa).

Residues D300, D304, and E453 each contribute to the Mg(2+) site. The short motif at 300-304 is the DDXXD motif element; it reads DDTFD.

It belongs to the terpene synthase family. Tpsa subfamily. Requires Mg(2+) as cofactor. Mn(2+) is required as a cofactor. As to expression, mostly expressed in stem and trichomes, to a lower extent in roots, leaves and flowers and, at low levels, in fruits.

The protein localises to the cytoplasm. It carries out the reaction (2E,6E)-farnesyl diphosphate = germacrene C + diphosphate. The catalysed reaction is (2E)-geranyl diphosphate = terpinolene + diphosphate. The enzyme catalyses (2E)-geranyl diphosphate = limonene + diphosphate. It catalyses the reaction (2E)-geranyl diphosphate = beta-myrcene + diphosphate. It carries out the reaction (2Z,6Z)-farnesyl diphosphate = germacrene C + diphosphate. It functions in the pathway secondary metabolite biosynthesis; terpenoid biosynthesis. Its function is as follows. Involved in the biosynthesis of germacrene C, one of the most abundant sesquiterpene in the leaf oil of tomato. Produces mainly germacrene C, but also smaller amounts of germacrene A, B and D when used with farnesyl diphosphate (FPP) as substrate; able to use both (2E,6E)-farnesyl diphosphate ((EE)-FPP) and (2Z,6Z)-farnesyl diphosphate ((ZZ)-FPP). No or low activity with geranylgeranyl diphosphate (GGPP). Can act with a low efficiency as a monoterpene synthase with geranyl diphosphate (GPP) as substrate, thus producing beta-myrcene, limonene and terpinolene. The polypeptide is Sesquiterpene synthase 9 (Solanum lycopersicum (Tomato)).